Reading from the N-terminus, the 233-residue chain is Large ribosomal subunit protein uL22m (233 aa).

The protein belongs to the universal ribosomal protein uL22 family. Component of the mitochondrial ribosome large subunit (39S) which comprises a 16S rRNA and about 50 distinct proteins.

It localises to the mitochondrion. In Drosophila pseudoobscura pseudoobscura (Fruit fly), this protein is Large ribosomal subunit protein uL22m (mRpL22).